Reading from the N-terminus, the 65-residue chain is UPF0370 protein Ent638_2968 (65 aa).

Residues 4-24 (LSKYWWILVLVFLVGVLLNVI) form a helical membrane-spanning segment. The disordered stretch occupies residues 39–65 (KPELPPHRDFNDKWDDDDNWPKKDQKK). Residues 42-65 (LPPHRDFNDKWDDDDNWPKKDQKK) show a composition bias toward basic and acidic residues.

It belongs to the UPF0370 family.

The protein resides in the cell membrane. This chain is UPF0370 protein Ent638_2968, found in Enterobacter sp. (strain 638).